We begin with the raw amino-acid sequence, 66 residues long: Large ribosomal subunit protein uL29 (66 aa).

This sequence belongs to the universal ribosomal protein uL29 family.

This is Large ribosomal subunit protein uL29 from Francisella tularensis subsp. holarctica (strain LVS).